The primary structure comprises 158 residues: Pathogenesis-related protein 2 (158 aa).

It belongs to the BetVI family.

The polypeptide is Pathogenesis-related protein 2 (PR2) (Petroselinum crispum (Parsley)).